We begin with the raw amino-acid sequence, 1318 residues long: Serine/threonine-protein kinase ppk18 (1318 aa).

The disordered stretch occupies residues 431–485; sequence PSVSPEEVHDISQFNHRNDPPITAASVDSSNSFSVHRSSTNHSSTNSGSPNLSRR. Residues 462-479 show a composition bias toward low complexity; the sequence is SFSVHRSSTNHSSTNSGS. The Protein kinase domain maps to 566-934; sequence YEIIKPISKG…INEIKEHPFF (369 aa). ATP contacts are provided by residues 572-580 and Lys-595; that span reads ISKGTFGTV. Asp-690 serves as the catalytic Proton acceptor. The region spanning 935-1044 is the AGC-kinase C-terminal domain; sequence NGINWDDIFS…KNLSVLERAN (110 aa). Disordered regions lie at residues 968 to 1022, 1058 to 1078, and 1091 to 1127; these read GAAE…FSEA, KLHI…DMPS, and SLMT…GPKS. A compositionally biased stretch (polar residues) spans 972–1000; sequence SNMSSSVNSGEEVSKDNNVSQERGSQFLR. Over residues 1091 to 1115 the composition is skewed to polar residues; sequence SLMTNQGSNFSSTDSTPRKSINSSD. Over residues 1116–1127 the composition is skewed to basic and acidic residues; that stretch reads VESRSKTDGPKS. Residues 1200–1316 enclose the Response regulatory domain; the sequence is KALICVSKLN…LLRGYIARLC (117 aa).

The protein belongs to the protein kinase superfamily. Ser/Thr protein kinase family.

It is found in the cytoplasm. It catalyses the reaction L-seryl-[protein] + ATP = O-phospho-L-seryl-[protein] + ADP + H(+). The enzyme catalyses L-threonyl-[protein] + ATP = O-phospho-L-threonyl-[protein] + ADP + H(+). This Schizosaccharomyces pombe (strain 972 / ATCC 24843) (Fission yeast) protein is Serine/threonine-protein kinase ppk18 (ppk18).